The sequence spans 300 residues: MGAPKQKWTQEEESALKSGVIKHGPGKWRTILKDPEFSGVLYLRSNVDLKDKWRNMSVMANGWGSREKSRLAVKRTFSLPKQEENSLALTNSLQSDEENVDATSGLQVSSNPPPRRPNVRLDSLIMEAIATLKEPGGCNKTTIGAYIEDQYHAPPDFKRLLSTKLKYLTSCGKLVKVKRKYRIPNSTPLSSHRRKGLGVFGGKQRTSSLPSPKTDIDEVNFQTRSQIDTEIARMKSMNVHEAAAVAAQAVAEAEAAMAEAEEAAKEAEAAEAEAEAAQAFAEEASKTLKGRNICKMMIRA.

Residues 1 to 58 form the HTH myb-type domain; the sequence is MGAPKQKWTQEEESALKSGVIKHGPGKWRTILKDPEFSGVLYLRSNVDLKDKWRNMSV. Positions 28–57 form a DNA-binding region, H-T-H motif; the sequence is WRTILKDPEFSGVLYLRSNVDLKDKWRNMS. Disordered stretches follow at residues 93 to 119 and 185 to 213; these read LQSDEENVDATSGLQVSSNPPPRRPNV and NSTPLSSHRRKGLGVFGGKQRTSSLPSPK. The H15 domain occupies 117–185; that stretch reads PNVRLDSLIM…KVKRKYRIPN (69 aa). The stretch at 241–290 forms a coiled coil; it reads EAAAVAAQAVAEAEAAMAEAEEAAKEAEAAEAEAEAAQAFAEEASKTLKG.

Belongs to the histone H1/H5 family. SMH subfamily. Forms a homodimer and heterodimers with TRB2 or TRB3. Interacts with POT1b, TRB2 and TRB3 through its H15 domain.

The protein resides in the nucleus. It localises to the nucleolus. The protein localises to the chromosome. Its function is as follows. Binds preferentially double-stranded telomeric repeats. This is Telomere repeat-binding factor 1 (TRB1) from Arabidopsis thaliana (Mouse-ear cress).